The primary structure comprises 121 residues: Large ribosomal subunit protein uL14c (121 aa).

Belongs to the universal ribosomal protein uL14 family. In terms of assembly, part of the 50S ribosomal subunit.

It localises to the plastid. The protein localises to the organellar chromatophore. Its function is as follows. Binds to 23S rRNA. This is Large ribosomal subunit protein uL14c from Paulinella chromatophora.